The following is a 107-amino-acid chain: Theromyzin (107 aa).

A signal peptide spans 1–21 (MHAKIILALFLGMTAFLAVQA).

Coelomic liquid (at protein level). Expressed in large fat cells in contact with coelomic cavities, in intestinal epithelia and at the epidermis level.

It is found in the secreted. Its function is as follows. Has bacteriostatic activity against M.luteus. No activity toward E.coli and F.oxysporum. This chain is Theromyzin, found in Theromyzon tessulatum (Duck leech).